The chain runs to 366 residues: MAHKLLNDTFLRALLRQPTDYTPIWLMRQAGRYLPEYNATRGRAGSFLGLAKSPAYATEVTLQPLDRYPLDAAILFSDILTVPDAMGLGLEFVTGEGPKFVRPVRTEDDVARLAVPDIDATLRYVTDAVREIRTALTDAQGRQRVPLIGFSGSPWTLACYMVEGGGSADFRTVKSMLYARPDLMHRILDVNARSVAAYLNAQIEAGAQAVMIFDTWGGALADGVYQRFSLQYIQQVVSQLKRDHGGEKVPVITFTKGGGLWLDEIAETGVDAVGLDWTVNLSKARERVGGKVALQGNIDPSVLFAPPASIRMEARAVLDSFGNHPGHVFNLGHGISQFTPPENVAELVDEVHRHSRAIRSGAHAPA.

Substrate is bound by residues 28–32 (RQAGR), Asp78, Tyr160, Thr215, and His333.

This sequence belongs to the uroporphyrinogen decarboxylase family. As to quaternary structure, homodimer.

Its subcellular location is the cytoplasm. It carries out the reaction uroporphyrinogen III + 4 H(+) = coproporphyrinogen III + 4 CO2. The protein operates within porphyrin-containing compound metabolism; protoporphyrin-IX biosynthesis; coproporphyrinogen-III from 5-aminolevulinate: step 4/4. Functionally, catalyzes the decarboxylation of four acetate groups of uroporphyrinogen-III to yield coproporphyrinogen-III. In Paraburkholderia phytofirmans (strain DSM 17436 / LMG 22146 / PsJN) (Burkholderia phytofirmans), this protein is Uroporphyrinogen decarboxylase.